The chain runs to 135 residues: Large ribosomal subunit protein eL27x (135 aa).

It belongs to the eukaryotic ribosomal protein eL27 family.

The polypeptide is Large ribosomal subunit protein eL27x (RPL27C) (Arabidopsis thaliana (Mouse-ear cress)).